Consider the following 331-residue polypeptide: tRNA N6-adenosine threonylcarbamoyltransferase (331 aa).

The Fe cation site is built by H109, H113, and Y130. Substrate is bound by residues 130-134 (YLSGG), D162, D183, and S262. Residue D290 coordinates Fe cation.

This sequence belongs to the KAE1 / TsaD family. It depends on Fe(2+) as a cofactor.

The protein localises to the cytoplasm. It catalyses the reaction L-threonylcarbamoyladenylate + adenosine(37) in tRNA = N(6)-L-threonylcarbamoyladenosine(37) in tRNA + AMP + H(+). Required for the formation of a threonylcarbamoyl group on adenosine at position 37 (t(6)A37) in tRNAs that read codons beginning with adenine. Is probably involved in the transfer of the threonylcarbamoyl moiety of threonylcarbamoyl-AMP (TC-AMP) to the N6 group of A37. This is tRNA N6-adenosine threonylcarbamoyltransferase from Metallosphaera sedula (strain ATCC 51363 / DSM 5348 / JCM 9185 / NBRC 15509 / TH2).